Here is a 673-residue protein sequence, read N- to C-terminus: MSKPFKLNSAFKPSGDQPDAIRRLEEGLEDGLAHQTLLGVTGSGKTFTIANVIADLQRPTMVLAPNKTLAAQLYGEMKEFFPENAVEYFVSYYDYYQPEAYVPSSDTFIEKDASVNEHIEQMRLSATKALLERRDVVVVASVSAIYGLGDPDLYLKMMLHLTVGMLIDQRAILRRLAELQYTRNDQAFQRGTFRVRGEVIDIFPAESDDIALRVELFDEEVERLSLFDPLTGQVESTVPRYTIYPKTHYVTPRERILQAMEEIKDELADRRKVLLANNKLLEEQRLSQRTQFDLEMMNELGYCSGIENYSRFLSGRGPGEPPPTLFDYLPADGLLVVDESHVTIPQIGGMYRGDRARKETLVEYGFRLPSAMDNRPLKFEEFEALAPQTIYVSATPGNYELEKSGDEVVDQVVRPTGLLDPIIEVRPVATQVDDLLSEIRQRAAINERVLVTTLTKRMAEDLTEYLEEHGERVRYLHSDIDTVERMEIIRDLRLGEFDVLVGINLLREGLDMPEVSLVAILDADKEGFLRSERSLIQTIGRAARNVNGKAILYGDKITPSMAKAIGETERRREKQQKYNEEHGITPQGLNKKVVDILALGQNIAKTKAKGKGKGRSTAKAGIVELDMTPKALQQKIHELEGQMMQHAQNLEFEEAAQIRDQLHQLRELFIAAS.

In terms of domain architecture, Helicase ATP-binding spans 26–183 (EGLEDGLAHQ…RRLAELQYTR (158 aa)). 39–46 (GVTGSGKT) is an ATP binding site. Residues 92-115 (YYDYYQPEAYVPSSDTFIEKDASV) carry the Beta-hairpin motif. The 167-residue stretch at 431–597 (QVDDLLSEIR…GLNKKVVDIL (167 aa)) folds into the Helicase C-terminal domain. The region spanning 633 to 668 (QQKIHELEGQMMQHAQNLEFEEAAQIRDQLHQLREL) is the UVR domain.

This sequence belongs to the UvrB family. In terms of assembly, forms a heterotetramer with UvrA during the search for lesions. Interacts with UvrC in an incision complex.

The protein localises to the cytoplasm. The UvrABC repair system catalyzes the recognition and processing of DNA lesions. A damage recognition complex composed of 2 UvrA and 2 UvrB subunits scans DNA for abnormalities. Upon binding of the UvrA(2)B(2) complex to a putative damaged site, the DNA wraps around one UvrB monomer. DNA wrap is dependent on ATP binding by UvrB and probably causes local melting of the DNA helix, facilitating insertion of UvrB beta-hairpin between the DNA strands. Then UvrB probes one DNA strand for the presence of a lesion. If a lesion is found the UvrA subunits dissociate and the UvrB-DNA preincision complex is formed. This complex is subsequently bound by UvrC and the second UvrB is released. If no lesion is found, the DNA wraps around the other UvrB subunit that will check the other stand for damage. The polypeptide is UvrABC system protein B (Salmonella heidelberg (strain SL476)).